We begin with the raw amino-acid sequence, 629 residues long: Pentatricopeptide repeat-containing protein At1g63150 (629 aa).

PPR repeat units follow at residues 46 to 81, 82 to 116, 117 to 151, 152 to 186, 187 to 221, 222 to 256, 257 to 291, 292 to 326, 327 to 361, 362 to 396, 397 to 431, 432 to 466, 467 to 501, 502 to 532, 534 to 568, and 569 to 603; these read ASGD…RPFP, SIVE…GISH, DLYT…GYEP, DIVT…GYKP, DTFT…GCQP, DLVT…RIKA, NVVI…GIRP, NVVT…KINP, NVVT…SIDP, DTIT…DCLP, NIQT…GLVG, NTVT…RVPT, DIMT…EMEL, NIFI…LSIK, DVVT…GTLP, and NSGT…GFVG.

It belongs to the PPR family. P subfamily.

The protein is Pentatricopeptide repeat-containing protein At1g63150 of Arabidopsis thaliana (Mouse-ear cress).